A 653-amino-acid polypeptide reads, in one-letter code: Threonine--tRNA ligase (653 aa).

A TGS domain is found at 1–61 (MIKITFPDGN…NEDAEVKLFK (61 aa)). The interval 243-542 (DHRKIGKELE…LIEHTAGKFP (300 aa)) is catalytic. Positions 338, 389, and 519 each coordinate Zn(2+).

The protein belongs to the class-II aminoacyl-tRNA synthetase family. In terms of assembly, homodimer. Zn(2+) serves as cofactor.

It is found in the cytoplasm. It catalyses the reaction tRNA(Thr) + L-threonine + ATP = L-threonyl-tRNA(Thr) + AMP + diphosphate + H(+). Functionally, catalyzes the attachment of threonine to tRNA(Thr) in a two-step reaction: L-threonine is first activated by ATP to form Thr-AMP and then transferred to the acceptor end of tRNA(Thr). Also edits incorrectly charged L-seryl-tRNA(Thr). This chain is Threonine--tRNA ligase, found in Porphyromonas gingivalis (strain ATCC 33277 / DSM 20709 / CIP 103683 / JCM 12257 / NCTC 11834 / 2561).